The sequence spans 119 residues: Holo-[acyl-carrier-protein] synthase (119 aa).

Mg(2+) is bound by residues Asp-8 and Glu-50.

The protein belongs to the P-Pant transferase superfamily. AcpS family. The cofactor is Mg(2+).

It localises to the cytoplasm. The catalysed reaction is apo-[ACP] + CoA = holo-[ACP] + adenosine 3',5'-bisphosphate + H(+). Its function is as follows. Transfers the 4'-phosphopantetheine moiety from coenzyme A to a Ser of acyl-carrier-protein. This Clavibacter sepedonicus (Clavibacter michiganensis subsp. sepedonicus) protein is Holo-[acyl-carrier-protein] synthase.